Here is a 426-residue protein sequence, read N- to C-terminus: Protein FAM181B (426 aa).

2 disordered regions span residues 106–157 (GLMG…AAAA) and 226–246 (NLPPSFFTEPSRAGGGGCGPS). Positions 128-141 (PLAAPSAPTVAAPA) are enriched in low complexity.

It belongs to the FAM181 family.

This is Protein FAM181B (FAM181B) from Homo sapiens (Human).